Reading from the N-terminus, the 406-residue chain is 4-hydroxy-3-methylbut-2-en-1-yl diphosphate synthase (ferredoxin) (406 aa).

4 residues coordinate [4Fe-4S] cluster: Cys-315, Cys-318, Cys-349, and Glu-356.

The protein belongs to the IspG family. It depends on [4Fe-4S] cluster as a cofactor.

The catalysed reaction is (2E)-4-hydroxy-3-methylbut-2-enyl diphosphate + 2 oxidized [2Fe-2S]-[ferredoxin] + H2O = 2-C-methyl-D-erythritol 2,4-cyclic diphosphate + 2 reduced [2Fe-2S]-[ferredoxin] + H(+). It participates in isoprenoid biosynthesis; isopentenyl diphosphate biosynthesis via DXP pathway; isopentenyl diphosphate from 1-deoxy-D-xylulose 5-phosphate: step 5/6. In terms of biological role, converts 2C-methyl-D-erythritol 2,4-cyclodiphosphate (ME-2,4cPP) into 1-hydroxy-2-methyl-2-(E)-butenyl 4-diphosphate. In Trichodesmium erythraeum (strain IMS101), this protein is 4-hydroxy-3-methylbut-2-en-1-yl diphosphate synthase (ferredoxin).